We begin with the raw amino-acid sequence, 182 residues long: Phospholipase A2 inhibitor gamma subunit A (182 aa).

Disulfide bonds link cysteine 3-cysteine 27, cysteine 6-cysteine 13, cysteine 20-cysteine 48, cysteine 54-cysteine 75, cysteine 76-cysteine 81, cysteine 99-cysteine 124, cysteine 117-cysteine 146, and cysteine 150-cysteine 172. N-linked (GlcNAc...) asparagine glycosylation is present at asparagine 157.

The protein belongs to the CNF-like-inhibitor family. Heterotrimer of 2 subunits A and 1 subunit B. In terms of processing, N-glycosylation is not important for activity, since deglycosylation does not change its PLA2 inhibitory activity. Expressed by the liver.

The protein localises to the secreted. Strongly inhibits its own venom PLA2 and all other PLA2s tested including Elapid, Crotalid and Viperid venom PLA2s, as well as honeybee PLA2s. This Laticauda semifasciata (Black-banded sea krait) protein is Phospholipase A2 inhibitor gamma subunit A.